The chain runs to 208 residues: 2-dehydro-3-deoxy-phosphogluconate aldolase (208 aa).

The active-site Proton acceptor is the Glu-41. Residues Arg-45, Thr-68, and Lys-128 each coordinate pyruvate. Lys-128 (schiff-base intermediate with substrate) is an active-site residue.

The protein belongs to the KHG/KDPG aldolase family. In terms of assembly, homotrimer.

The protein localises to the cytoplasm. The enzyme catalyses 2-dehydro-3-deoxy-6-phospho-D-gluconate = D-glyceraldehyde 3-phosphate + pyruvate. It participates in carbohydrate acid metabolism; 2-dehydro-3-deoxy-D-gluconate degradation; D-glyceraldehyde 3-phosphate and pyruvate from 2-dehydro-3-deoxy-D-gluconate: step 2/2. Functionally, involved in the degradation of glucose via the Entner-Doudoroff pathway. Catalyzes the reversible, stereospecific retro-aldol cleavage of 2-keto-3-deoxy-6-phosphogluconate (KDPG) to pyruvate and D-glyceraldehyde-3-phosphate. This Zymomonas mobilis subsp. mobilis (strain ATCC 31821 / ZM4 / CP4) protein is 2-dehydro-3-deoxy-phosphogluconate aldolase.